Reading from the N-terminus, the 796-residue chain is Fibroblast growth factor receptor 3 (796 aa).

The first 19 residues, 1–19, serve as a signal peptide directing secretion; sequence MLVWLCGLCLVTLAGGRSA. Over 20–358 the chain is Extracellular; sequence ARLPLTEGRP…AEPVPDVDTS (339 aa). Positions 21–119 constitute an Ig-like C2-type 1 domain; it reads RLPLTEGRPT…VLRNVTVRVT (99 aa). The cysteines at positions 56 and 102 are disulfide-linked. Residues Asn-91 and Asn-113 are each glycosylated (N-linked (GlcNAc...) asparagine). The disordered stretch occupies residues 117–142; the sequence is RVTDSPSSGDDEDDDEESESANAPKF. Positions 125-135 are enriched in acidic residues; sequence GDDEDDDEESE. 2 consecutive Ig-like C2-type domains span residues 140–233 and 239–344; these read PKFT…YTLD and PHRP…AWLT. A disulfide bond links Cys-165 and Cys-217. 5 N-linked (GlcNAc...) asparagine glycosylation sites follow: Asn-214, Asn-251, Asn-283, Asn-304, and Asn-317. Cys-264 and Cys-328 form a disulfide bridge. The helical transmembrane segment at 359–379 threads the bilayer; sequence VSILAAAGCVAVVILVVIIIF. The Cytoplasmic segment spans residues 380 to 796; it reads TYKMKMPSKK…HQQYNGVIRT (417 aa). The Protein kinase domain maps to 457 to 746; the sequence is LTLGKPLGEG…LTVTSTDEYL (290 aa). ATP contacts are provided by residues 463-471 and Lys-493; that span reads LGEGCFGQV. The active-site Proton acceptor is the Asp-602. Phosphotyrosine; by autocatalysis is present on residues Tyr-632, Tyr-633, Tyr-709, and Tyr-745.

The protein belongs to the protein kinase superfamily. Tyr protein kinase family. Fibroblast growth factor receptor subfamily. In terms of assembly, monomer. Homodimer after ligand binding. Autophosphorylated. Binding of FGF family members together with heparan sulfate proteoglycan or heparin promotes receptor dimerization and autophosphorylation on tyrosine residues. Autophosphorylation occurs in trans between the two FGFR molecules present in the dimer. Undetectable in the adult skeletal muscle. Low levels of expression were detected in the liver, lung and kidney. Medium levels of expression were detected in the heart, spleen, intestine and eye. Highest expression is observed in the testis.

Its subcellular location is the cell membrane. The catalysed reaction is L-tyrosyl-[protein] + ATP = O-phospho-L-tyrosyl-[protein] + ADP + H(+). Present in an inactive conformation in the absence of bound ligand. Ligand binding leads to dimerization and activation by autophosphorylation on tyrosine residues. Tyrosine-protein kinase that acts as a cell-surface receptor for fibroblast growth factors and plays an essential role in the regulation of cell proliferation, differentiation and apoptosis. Plays an essential role in the regulation of chondrocyte differentiation, proliferation and apoptosis, and is required for normal skeleton development. Regulates both osteogenesis and postnatal bone mineralization by osteoblasts. Promotes apoptosis in chondrocytes, but can also promote cancer cell proliferation. Phosphorylates PLCG1, CBL and FRS2. Ligand binding leads to the activation of several signaling cascades. Activation of PLCG1 leads to the production of the cellular signaling molecules diacylglycerol and inositol 1,4,5-trisphosphate. Phosphorylation of FRS2 triggers recruitment of GRB2, GAB1, PIK3R1 and SOS1, and mediates activation of RAS, MAPK1/ERK2, MAPK3/ERK1 and the MAP kinase signaling pathway, as well as of the AKT1 signaling pathway. In Pleurodeles waltl (Iberian ribbed newt), this protein is Fibroblast growth factor receptor 3 (FGFR3).